The following is a 285-amino-acid chain: Cell division protein ZipA (285 aa).

Methionine 1 is a topological domain (periplasmic). Residues 2 to 22 traverse the membrane as a helical segment; it reads EIGLREWLIVIGIVVIGGILF. The Cytoplasmic portion of the chain corresponds to 23–285; sequence DGWRRMRGSK…FERRQLTHKR (263 aa). The interval 49–88 is disordered; sequence AVSENSELLGPSRSVDFPQGAGFEPDEENLPSLSVRGPSR.

Belongs to the ZipA family. In terms of assembly, interacts with FtsZ via their C-terminal domains.

Its subcellular location is the cell inner membrane. In terms of biological role, essential cell division protein that stabilizes the FtsZ protofilaments by cross-linking them and that serves as a cytoplasmic membrane anchor for the Z ring. Also required for the recruitment to the septal ring of downstream cell division proteins. This Azotobacter vinelandii (strain DJ / ATCC BAA-1303) protein is Cell division protein ZipA.